Reading from the N-terminus, the 573-residue chain is Probable cytochrome c oxidase subunit 1 (573 aa).

The helical transmembrane segment at 40-60 (IGIMYCVACISFFFIGGLLAL) threads the bilayer. Position 86 (histidine 86) interacts with Fe(II)-heme a. The next 6 helical transmembrane spans lie at 89-109 (IMLL…VLPL), 121-141 (LNAF…AGFI), 170-190 (LWIM…VNMI), 213-233 (IMVT…ALFG), 258-278 (LFWF…FGIV), and 290-310 (IFGY…SVAV). Residues histidine 264 and tyrosine 268 each contribute to the Cu cation site. A cross-link (1'-histidyl-3'-tyrosine (His-Tyr)) is located at residues 264–268 (HPEVY). Cu cation-binding residues include histidine 313 and histidine 314. Transmembrane regions (helical) follow at residues 315-335 (MFAT…LIAV) and 359-379 (MLFS…GVLL). Histidine 397 provides a ligand contact to heme a3. The next 3 helical transmembrane spans lie at 398–418 (FHYV…YFWF), 433–453 (LHFW…HWLG), and 476–496 (VSTI…WNVF). Residue histidine 399 coordinates Fe(II)-heme a.

It belongs to the heme-copper respiratory oxidase family.

Its subcellular location is the cell membrane. It catalyses the reaction 4 Fe(II)-[cytochrome c] + O2 + 8 H(+)(in) = 4 Fe(III)-[cytochrome c] + 2 H2O + 4 H(+)(out). It participates in energy metabolism; oxidative phosphorylation. Functionally, cytochrome c oxidase is the component of the respiratory chain that catalyzes the reduction of oxygen to water. Subunits 1-3 form the functional core of the enzyme complex. CO I is the catalytic subunit of the enzyme. Electrons originating in cytochrome c are transferred via the copper A center of subunit 2 and heme A of subunit 1 to the bimetallic center formed by heme A3 and copper B. The sequence is that of Probable cytochrome c oxidase subunit 1 (ctaD) from Mycobacterium bovis (strain ATCC BAA-935 / AF2122/97).